The sequence spans 96 residues: UPF0235 protein ECA3630 (96 aa).

Belongs to the UPF0235 family.

The chain is UPF0235 protein ECA3630 from Pectobacterium atrosepticum (strain SCRI 1043 / ATCC BAA-672) (Erwinia carotovora subsp. atroseptica).